Here is a 1338-residue protein sequence, read N- to C-terminus: Thioester-containing protein 1 allele R1 (1338 aa).

The first 21 residues, 1 to 21, serve as a signal peptide directing secretion; sequence MWQFIRSRILTVIIFIGAAHG. N-linked (GlcNAc...) asparagine glycans are attached at residues N68, N199, N242, N312, and N481. Residues 580 to 609 form a may contain the cleavage site region; sequence ENEFDIFHSLGLFARTLDDILFDSANEKTG. N-linked (GlcNAc...) asparagine glycans are attached at residues N637, N728, and N813. Residues 859 to 862 constitute a cross-link (isoglutamyl cysteine thioester (Cys-Gln)); that stretch reads CGEQ. N-linked (GlcNAc...) asparagine glycans are attached at residues N919 and N1065. Cystine bridges form between C1217/C1283, C1326/C1338, and C1329/C1334.

As to quaternary structure, heterodimer of a TEP1-N chain and an TEP1-C chain non-covalently linked. Forms a complex composed of TEP1-N and TEP1-C heterodimer, LRIM1 and APL1C; the interaction stabilizes TEP1-N and TEP1-C heterodimer, prevents its binding to tissues while circulating in the hemolymph and protects the thioester bond from hydrolysis. Mature TEP1 and to a lesser extent full-length TEP1 interact with SPCLIP1; the interaction is induced by microbial infection. In the hemolymph, the full-length protein is cleaved by an unknow protease into a 75kDa N-terminal (TEP1-N) chain and an 80kDa C-terminal (TEP1-C) chain which remain non-covalently linked. The TEP1-C chain contains the thioester bond which covalently binds to the pathogen surface. Cleavage is induced by bacterial infection or aseptic wound injury. During embryonic and pupal development, the cleaved form is the predominant form. In terms of processing, N-glycosylated.

Its subcellular location is the secreted. Functionally, plays an essential role in the innate immune response against bacteria, fungi and protozoa infection. After proteolytic cleavage, the protein C-terminus binds covalently through a thioester bond to the pathogen surface resulting in pathogen clearance either by melanization or lysis. Initiate the recruitment and activation of a cascade of proteases, mostly of CLIP-domain serine proteases, which leads to the proteolytic cleavage of the prophenoloxidase (PPO) into active phenoloxidase (PO), the rate-limiting enzyme in melanin biosynthesis. In response to parasite P.berghei-mediated infection, binds to and mediates killing of ookinetes, as they egress from midgut epithelial cells into the basal labyrinth, by both lysis and melanization. During bacterial infection, binds to both Gram-positive and Gram-negative bacteria but only promotes phagocytosis of Gram-negative bacteria. Promotes the accumulation of SPCLIP1 onto the surface of P.berghei ookinetes and bacterium E.coli which leads to the melanization of the pathogen. Recruits CLIPA2 to bacteria surface. In response to bacterial infection, required for periostial hemocyte aggregation, but not for the aggregation of sessile hemocytes in non-periostial regions. During the late stage of fungus B.bassiana-mediated infection, required for the initiation of hyphae melanization by binding to the surface of hyphae and recruiting prophenoloxidase PPO to them. Plays a role in male fertility by binding to defective sperm cells and promoting their removal during spermatogenesis. In terms of biological role, binds to and mediates killing of parasite P.bergei ookinetes by lysis and melanization. Its function is as follows. Binds covalently through a thioester bond to the pathogen surface resulting in pathogen clearance. In Anopheles gambiae (African malaria mosquito), this protein is Thioester-containing protein 1 allele R1.